A 225-amino-acid chain; its full sequence is Cytidylate kinase (225 aa).

12–20 (GPSGAGKGT) contacts ATP.

This sequence belongs to the cytidylate kinase family. Type 1 subfamily.

The protein localises to the cytoplasm. The enzyme catalyses CMP + ATP = CDP + ADP. It catalyses the reaction dCMP + ATP = dCDP + ADP. This chain is Cytidylate kinase, found in Pectobacterium carotovorum subsp. carotovorum (strain PC1).